A 268-amino-acid polypeptide reads, in one-letter code: Tryptophan synthase alpha chain (268 aa).

Residues Glu49 and Asp60 each act as proton acceptor in the active site.

It belongs to the TrpA family. Tetramer of two alpha and two beta chains.

It carries out the reaction (1S,2R)-1-C-(indol-3-yl)glycerol 3-phosphate + L-serine = D-glyceraldehyde 3-phosphate + L-tryptophan + H2O. Its pathway is amino-acid biosynthesis; L-tryptophan biosynthesis; L-tryptophan from chorismate: step 5/5. The alpha subunit is responsible for the aldol cleavage of indoleglycerol phosphate to indole and glyceraldehyde 3-phosphate. The chain is Tryptophan synthase alpha chain from Shigella sonnei (strain Ss046).